We begin with the raw amino-acid sequence, 276 residues long: Small ribosomal subunit protein uS3 (276 aa).

One can recognise a KH type-2 domain in the interval 17–86; it reads VDEYLAKELD…NPQIDVQDVG (70 aa). Residues 193 to 276 are disordered; the sequence is FQINAPPKEP…AETHGDIQDR (84 aa). Over residues 214-227 the composition is skewed to low complexity; the sequence is EAEPSQAAETQEQQ. Composition is skewed to basic and acidic residues over residues 228–240 and 258–276; these read AGEK…RLLD and PESR…IQDR.

Belongs to the universal ribosomal protein uS3 family. Part of the 30S ribosomal subunit.

Its function is as follows. Binds the lower part of the 30S subunit head. The protein is Small ribosomal subunit protein uS3 of Methanothrix thermoacetophila (strain DSM 6194 / JCM 14653 / NBRC 101360 / PT) (Methanosaeta thermophila).